The primary structure comprises 662 residues: Transketolase (662 aa).

His28 is a binding site for substrate. Thiamine diphosphate is bound by residues His68 and 115–117 (GPL). Position 156 (Asp156) interacts with Mg(2+). 2 residues coordinate thiamine diphosphate: Gly157 and Asn186. 2 residues coordinate Mg(2+): Asn186 and Ile188. His261, Arg356, and Ser383 together coordinate substrate. Residue His261 coordinates thiamine diphosphate. Glu410 serves as the catalytic Proton donor. Phe436 provides a ligand contact to thiamine diphosphate. Residues His460, Asp468, and Arg519 each coordinate substrate.

It belongs to the transketolase family. Homodimer. The cofactor is Mg(2+). It depends on Ca(2+) as a cofactor. Mn(2+) serves as cofactor. Co(2+) is required as a cofactor. Requires thiamine diphosphate as cofactor.

It catalyses the reaction D-sedoheptulose 7-phosphate + D-glyceraldehyde 3-phosphate = aldehydo-D-ribose 5-phosphate + D-xylulose 5-phosphate. Its pathway is carbohydrate biosynthesis; Calvin cycle. It functions in the pathway carbohydrate degradation; pentose phosphate pathway. In terms of biological role, catalyzes the transfer of a two-carbon ketol group from a ketose donor to an aldose acceptor, via a covalent intermediate with the cofactor thiamine pyrophosphate. In Staphylococcus epidermidis (strain ATCC 35984 / DSM 28319 / BCRC 17069 / CCUG 31568 / BM 3577 / RP62A), this protein is Transketolase (tkt).